We begin with the raw amino-acid sequence, 64 residues long: MRLHHLLLVLFFVVLSAGSGFTHGVTDSLSCRWKKGICVLTRCPGTMRQIGTCFGPPVKCCRLK.

A signal peptide spans 1–22; sequence MRLHHLLLVLFFVVLSAGSGFT. Intrachain disulfides connect Cys-31–Cys-60, Cys-38–Cys-53, and Cys-43–Cys-61.

The protein belongs to the beta-defensin family.

The protein localises to the secreted. Its function is as follows. Has bactericidal activity. This is Beta-defensin 2 (DEFB2) from Ovis aries (Sheep).